The following is a 29-amino-acid chain: Kunitz-type trypsin inhibitor IVTI (29 aa).

It belongs to the protease inhibitor I3 (leguminous Kunitz-type inhibitor) family. Monomer and dimer.

Functionally, inhibits bovine trypsin but not chymotrypsin. Also inhibits trypsin-like enzymes from midgut of several lepidopteran species and inhibits larval development in those species. Has fungicidal activity against yeast C.buinensis. Has a bacteriostatic effect against E.coli. Is not cytotoxic. The chain is Kunitz-type trypsin inhibitor IVTI from Inga vera (River koko).